The sequence spans 813 residues: Striatin-interacting protein 1 homolog (813 aa).

Disordered regions lie at residues 1-41 (MDGV…SEAP) and 307-379 (RAAS…RDEV). The span at 9-18 (NNKQKQNQML) shows a compositional bias: polar residues. Positions 22-35 (MRGEFTRNQRKDSE) are enriched in basic and acidic residues. Over residues 307–316 (RAASPPASAS) the composition is skewed to low complexity. Ser-310 carries the post-translational modification Phosphoserine. Residues 331 to 352 (KALIKQDNLDTFNEKDPYKADD) show a composition bias toward basic and acidic residues. Residues 353-367 (SHEDEEENDDNDNSL) are compositionally biased toward acidic residues.

The protein belongs to the STRIP family. Part of the core of STRIPAK complexes composed of PP2A catalytic and scaffolding subunits, the striatins (PP2A regulatory subunits), the striatin-associated proteins MOB4, STRIP1 and STRIP2, PDCD10 and members of the STE20 kinases, such as STK24 and STK26.

The protein resides in the cytoplasm. Functionally, plays a role in the regulation of cell morphology and cytoskeletal organization. Required in the cortical actin filament dynamics and cell shape. Part of the striatin-interacting phosphatase and kinase (STRIPAK) complexes. STRIPAK complexes have critical roles in protein (de)phosphorylation and are regulators of multiple signaling pathways including Hippo, MAPK, nuclear receptor and cytoskeleton remodeling. Different types of STRIPAK complexes are involved in a variety of biological processes such as cell growth, differentiation, apoptosis, metabolism and immune regulation. The sequence is that of Striatin-interacting protein 1 homolog (strip1) from Danio rerio (Zebrafish).